We begin with the raw amino-acid sequence, 2097 residues long: SCAR-like protein 1 (2097 aa).

7 disordered regions span residues 205-227, 544-565, 1443-1467, 1588-1616, 1730-1802, 1820-1842, and 1893-1944; these read IANS…PRTT, AHSS…SIES, SQIA…PLSS, STEE…DPQK, QERV…EKTV, ASSH…PVTS, and YEGP…EGGY. A compositionally biased stretch (low complexity) spans 549 to 562; that stretch reads KQSSQKSSGLDGSS. Over residues 1443-1454 the composition is skewed to polar residues; sequence SQIASCSPTPSN. Residues 1766–1794 are compositionally biased toward polar residues; it reads SISQQGLQGSVFPSDTSDNGEHSSYTSRA. The span at 1908–1922 shows a compositional bias: basic and acidic residues; that stretch reads YPHDDHNSEKEDIHQ. Residues 2028–2046 form the WH2 domain; it reads ERNLLLEQIRNKTFNLKPV.

The protein belongs to the SCAR/WAVE family.

The protein resides in the cytoplasm. Its subcellular location is the cytoskeleton. Involved in regulation of actin and microtubule organization. Part of a WAVE complex that activates the Arp2/3 complex. The chain is SCAR-like protein 1 from Oryza sativa subsp. japonica (Rice).